Consider the following 524-residue polypeptide: Alanine aminotransferase 2 (524 aa).

Lys342 is modified (N6-(pyridoxal phosphate)lysine).

This sequence belongs to the class-I pyridoxal-phosphate-dependent aminotransferase family. Alanine aminotransferase subfamily. Homodimer. It depends on pyridoxal 5'-phosphate as a cofactor.

The catalysed reaction is L-alanine + 2-oxoglutarate = pyruvate + L-glutamate. It functions in the pathway amino-acid degradation; L-alanine degradation via transaminase pathway; pyruvate from L-alanine: step 1/1. Its function is as follows. Catalyzes the reversible transamination between alanine and 2-oxoglutarate to form pyruvate and glutamate. This is Alanine aminotransferase 2 (gpt2) from Xenopus tropicalis (Western clawed frog).